Consider the following 273-residue polypeptide: Tyrosinase (273 aa).

A signal peptide spans 1–18 (MCLLALGFLLGILQPASG). N-linked (GlcNAc...) asparagine glycosylation is found at N86 and N169. Residues H180, H202, and H211 each contribute to the Cu cation site. N230 is a glycosylation site (N-linked (GlcNAc...) asparagine).

This sequence belongs to the tyrosinase family. Cu(2+) is required as a cofactor.

It localises to the melanosome membrane. The enzyme catalyses 2 L-dopa + O2 = 2 L-dopaquinone + 2 H2O. The catalysed reaction is L-tyrosine + O2 = L-dopaquinone + H2O. In terms of biological role, this is a copper-containing oxidase that functions in the formation of pigments such as melanins and other polyphenolic compounds. The protein is Tyrosinase (TYR) of Pelodiscus sinensis (Chinese softshell turtle).